The primary structure comprises 264 residues: Diphthine synthase (264 aa).

S-adenosyl-L-methionine is bound by residues leucine 10, aspartate 87, valine 90, 115 to 116 (SI), leucine 166, alanine 209, and histidine 234.

The protein belongs to the diphthine synthase family. In terms of assembly, homodimer.

The catalysed reaction is 2-[(3S)-amino-3-carboxypropyl]-L-histidyl-[translation elongation factor 2] + 3 S-adenosyl-L-methionine = diphthine-[translation elongation factor 2] + 3 S-adenosyl-L-homocysteine + 3 H(+). Its pathway is protein modification; peptidyl-diphthamide biosynthesis. In terms of biological role, S-adenosyl-L-methionine-dependent methyltransferase that catalyzes the trimethylation of the amino group of the modified target histidine residue in translation elongation factor 2 (EF-2), to form an intermediate called diphthine. The three successive methylation reactions represent the second step of diphthamide biosynthesis. This chain is Diphthine synthase, found in Thermococcus onnurineus (strain NA1).